The chain runs to 161 residues: Phosphotransferase enzyme IIB component GlvB (161 aa).

A helical transmembrane segment spans residues 10 to 32 (LTQIAIGLCFTLLYFVVFRTLIL). In terms of domain architecture, PTS EIIB type-1 spans 70–152 (LDQAAGILQA…DSLINSHQSA (83 aa)). The active-site Phosphocysteine intermediate is Cys92.

It is found in the cell inner membrane. The phosphoenolpyruvate-dependent sugar phosphotransferase system (sugar PTS), a major carbohydrate active -transport system, catalyzes the phosphorylation of incoming sugar substrates concomitantly with their translocation across the cell membrane. This operon may be cryptic in wild-type K12 strains. In Escherichia coli (strain K12), this protein is Phosphotransferase enzyme IIB component GlvB.